Consider the following 132-residue polypeptide: Small ribosomal subunit protein uS8 (132 aa).

This sequence belongs to the universal ribosomal protein uS8 family. In terms of assembly, part of the 30S ribosomal subunit. Contacts proteins S5 and S12.

Functionally, one of the primary rRNA binding proteins, it binds directly to 16S rRNA central domain where it helps coordinate assembly of the platform of the 30S subunit. The sequence is that of Small ribosomal subunit protein uS8 from Clostridium beijerinckii (strain ATCC 51743 / NCIMB 8052) (Clostridium acetobutylicum).